The sequence spans 62 residues: KHNFLNHGLSLNLVIKPYLALEGSVAFPAENGVQDTESTQEKRETGDEENSAKFPIGRRDFD.

The tract at residues 23-41 (GSVAFPAENGVQDTESTQE) is NGE-like. The interval 29–62 (AENGVQDTESTQEKRETGDEENSAKFPIGRRDFD) is disordered. The NEI-like stretch occupies residues 44–56 (ETGDEENSAKFPI). The interval 60 to 62 (DFD) is melanin-concentrating hormone-like.

The protein belongs to the melanin-concentrating hormone family.

This chain is Pro-MCH variant (PMCHL1), found in Pan paniscus (Pygmy chimpanzee).